Reading from the N-terminus, the 337-residue chain is Anthraniloyl-CoA anthraniloyltransferase (337 aa).

Positions 29 and 33 each coordinate anthraniloyl-CoA. The active-site Acyl-thioester intermediate is C113. Residues 154-155 (RN), 221-224 (MRGR), and H258 contribute to the anthraniloyl-CoA site.

Belongs to the thiolase-like superfamily. FabH family. Homodimer.

It localises to the cytoplasm. The enzyme catalyses anthraniloyl-CoA + malonyl-CoA + H(+) = (2-aminobenzoyl)acetyl-CoA + CO2 + CoA. Functionally, required for the biosynthesis of a number of signaling molecules, such as the quinolone signal 2-heptyl-3-hydroxy-4(1H)-quinolone (PQS), 2-heptyl-4-hydroxyquinoline (HHQ) and 2,4-dihydroxyquinoline (DHQ). These molecules are required for normal biofilm formation. Catalyzes the transfer of the anthraniloyl moiety from anthraniloyl-CoA to malonyl-CoA to form 2-aminobenzoylacetyl-CoA. The first step of the reaction is the formation of a covalent anthraniloyl-PqsD intermediate. Next, the short-lived intermediate 3-(2-aminophenyl)-3-oxopropanoyl-CoA is formed. An intramolecular rearrangement of this intermediate can give rise to 2,4-dihydroxyquinoline (DHQ). The chain is Anthraniloyl-CoA anthraniloyltransferase (pqsD) from Pseudomonas aeruginosa (strain ATCC 15692 / DSM 22644 / CIP 104116 / JCM 14847 / LMG 12228 / 1C / PRS 101 / PAO1).